Here is a 180-residue protein sequence, read N- to C-terminus: Translation initiation factor IF-3 (180 aa).

This sequence belongs to the IF-3 family. Monomer.

It is found in the cytoplasm. Its function is as follows. IF-3 binds to the 30S ribosomal subunit and shifts the equilibrium between 70S ribosomes and their 50S and 30S subunits in favor of the free subunits, thus enhancing the availability of 30S subunits on which protein synthesis initiation begins. The sequence is that of Translation initiation factor IF-3 from Pectobacterium atrosepticum (strain SCRI 1043 / ATCC BAA-672) (Erwinia carotovora subsp. atroseptica).